A 609-amino-acid polypeptide reads, in one-letter code: Probable G-protein coupled receptor 153 (609 aa).

Topologically, residues 1 to 11 (MSDERRLPGSA) are extracellular. A helical transmembrane segment spans residues 12–32 (VGWLVCGGLSLLANAWGILSV). The Cytoplasmic portion of the chain corresponds to 33-41 (GAKQKKWKP). Residues 42–62 (LEFLLCTLAATHMLNVAVPIA) traverse the membrane as a helical segment. Residues 63–84 (TYSVVQLRRQRPDFEWNEGLCK) are Extracellular-facing. Residues 85–105 (VFVSTFYTLTLATCFSVTSLS) form a helical membrane-spanning segment. Residues 106 to 126 (YHRMWMVCWPVNYRLSNAKKQ) lie on the Cytoplasmic side of the membrane. A helical membrane pass occupies residues 127 to 147 (AVHTVMGIWMVSFILSALPAV). Residues 148 to 175 (GWHDTSERFYTHGCRFIVAEIGLGFGVC) are Extracellular-facing. Residues 176-196 (FLLLVGGSVAMGVICTAIALF) traverse the membrane as a helical segment. Residues 197 to 243 (QTLAVQVGRQADRRAFTVPTIVVEDAQGKRRSSIDGSEPAKTSLQTT) are Cytoplasmic-facing. The helical transmembrane segment at 244-264 (GLVTTIVFIYDCLMGFPVLVV) threads the bilayer. Topologically, residues 265–276 (SFSSLRADASAP) are extracellular. The helical transmembrane segment at 277-297 (WMALCVLWCSVAQALLLPVFL) threads the bilayer. Residues 298 to 609 (WACDRYRADL…LHSDSLGSAS (312 aa)) lie on the Cytoplasmic side of the membrane. Disordered regions lie at residues 446 to 496 (DAPP…SASA) and 514 to 609 (ALRR…GSAS). Low complexity-rich tracts occupy residues 458–479 (ESLLSLRPSALDSGPRGARDSP) and 527–536 (AAPDGADPGE). Residues 571 to 583 (EPGGLRAAGGGGS) show a composition bias toward gly residues. Low complexity predominate over residues 584-596 (TSSFLSSPSESSG).

Belongs to the G-protein coupled receptor 1 family.

Its subcellular location is the cell membrane. Orphan receptor. The chain is Probable G-protein coupled receptor 153 (GPR153) from Homo sapiens (Human).